The chain runs to 267 residues: Phosphatidylglycerol--prolipoprotein diacylglyceryl transferase (267 aa).

4 helical membrane passes run 10-30 (VAIA…VVGF), 54-74 (LLFY…ALFY), 90-110 (WDGG…AWLF), and 116-136 (LAFF…LGAG). A 1,2-diacyl-sn-glycero-3-phospho-(1'-sn-glycerol) is bound at residue Arg137. Helical transmembrane passes span 169–189 (PSPL…LWWV), 197–217 (GMIS…VEFV), and 231–251 (WLTM…ALCV).

It belongs to the Lgt family.

Its subcellular location is the cell inner membrane. The catalysed reaction is L-cysteinyl-[prolipoprotein] + a 1,2-diacyl-sn-glycero-3-phospho-(1'-sn-glycerol) = an S-1,2-diacyl-sn-glyceryl-L-cysteinyl-[prolipoprotein] + sn-glycerol 1-phosphate + H(+). The protein operates within protein modification; lipoprotein biosynthesis (diacylglyceryl transfer). Catalyzes the transfer of the diacylglyceryl group from phosphatidylglycerol to the sulfhydryl group of the N-terminal cysteine of a prolipoprotein, the first step in the formation of mature lipoproteins. The polypeptide is Phosphatidylglycerol--prolipoprotein diacylglyceryl transferase (Chromohalobacter salexigens (strain ATCC BAA-138 / DSM 3043 / CIP 106854 / NCIMB 13768 / 1H11)).